Reading from the N-terminus, the 437-residue chain is Glucose-1-phosphate adenylyltransferase (437 aa).

Residues tyrosine 113, glycine 179, 194 to 195 (EK), and serine 212 contribute to the alpha-D-glucose 1-phosphate site.

Belongs to the bacterial/plant glucose-1-phosphate adenylyltransferase family. As to quaternary structure, homotetramer.

It carries out the reaction alpha-D-glucose 1-phosphate + ATP + H(+) = ADP-alpha-D-glucose + diphosphate. It functions in the pathway glycan biosynthesis; glycogen biosynthesis. In terms of biological role, involved in the biosynthesis of ADP-glucose, a building block required for the elongation reactions to produce glycogen. Catalyzes the reaction between ATP and alpha-D-glucose 1-phosphate (G1P) to produce pyrophosphate and ADP-Glc. This chain is Glucose-1-phosphate adenylyltransferase, found in Haemophilus influenzae (strain 86-028NP).